The primary structure comprises 240 residues: ATP-dependent dethiobiotin synthetase BioD (240 aa).

Position 13 to 18 (13 to 18) interacts with ATP; that stretch reads GVGKTI. Thr17 is a binding site for Mg(2+). Lys38 is an active-site residue. Thr42 provides a ligand contact to substrate. ATP-binding positions include Asp55, 116 to 119, and 214 to 216; these read EGVG and PYL. The Mg(2+) site is built by Asp55 and Glu116.

It belongs to the dethiobiotin synthetase family. Homodimer. Mg(2+) serves as cofactor.

The protein resides in the cytoplasm. The catalysed reaction is (7R,8S)-7,8-diammoniononanoate + CO2 + ATP = (4R,5S)-dethiobiotin + ADP + phosphate + 3 H(+). It functions in the pathway cofactor biosynthesis; biotin biosynthesis; biotin from 7,8-diaminononanoate: step 1/2. Catalyzes a mechanistically unusual reaction, the ATP-dependent insertion of CO2 between the N7 and N8 nitrogen atoms of 7,8-diaminopelargonic acid (DAPA, also called 7,8-diammoniononanoate) to form a ureido ring. The protein is ATP-dependent dethiobiotin synthetase BioD of Thermodesulfovibrio yellowstonii (strain ATCC 51303 / DSM 11347 / YP87).